The following is a 105-amino-acid chain: MRNALIYPILTEKATRMTEVQTQYTFKVNPRANKLEIRKAVEEKFNVDVDSVRTVICRGKRKRQFTRKGLIEGKKSNWKKAIVTLKDGATIDFYGATASAGQANG.

It belongs to the universal ribosomal protein uL23 family. Part of the 50S ribosomal subunit. Contacts protein L29, and trigger factor when it is bound to the ribosome.

Functionally, one of the early assembly proteins it binds 23S rRNA. One of the proteins that surrounds the polypeptide exit tunnel on the outside of the ribosome. Forms the main docking site for trigger factor binding to the ribosome. The polypeptide is Large ribosomal subunit protein uL23 (Chloroherpeton thalassium (strain ATCC 35110 / GB-78)).